The chain runs to 340 residues: Nesprin-4 (340 aa).

2 disordered regions span residues 1 to 86 (MAQF…DGGK) and 254 to 277 (HRRR…DAML). The Cytoplasmic segment spans residues 1-291 (MAQFPLLGHG…GVPAPASRRP (291 aa)). Positions 53 to 63 (APEHFMDEPKS) are enriched in basic and acidic residues. Residues 283 to 340 (VPAPASRRPLTFLLLLLFLLLVGATLLLPLSGVPCCSHTRLARTPYLVLSYVNGLPPI) enclose the KASH domain. Residues 292 to 312 (LTFLLLLLFLLLVGATLLLPL) form a helical; Anchor for type IV membrane protein membrane-spanning segment. Residues 313-340 (SGVPCCSHTRLARTPYLVLSYVNGLPPI) lie on the Perinuclear space side of the membrane.

Belongs to the nesprin family. In terms of assembly, core component of LINC complexes which are composed of inner nuclear membrane SUN domain-containing proteins coupled to outer nuclear membrane KASH domain-containing nesprins. SUN and KASH domain-containing proteins seem to bind each other promiscuously; however, differentially expression of LINC complex constituents can give rise to specific assemblies. Probably part of a SUN1-containing LINC complex. Interacts with kinesins KIF5B and KLC1.

Its subcellular location is the nucleus outer membrane. Its function is as follows. As a component of the LINC (LInker of Nucleoskeleton and Cytoskeleton) complex, involved in the connection between the nuclear lamina and the cytoskeleton. The nucleocytoplasmic interactions established by the LINC complex play an important role in the transmission of mechanical forces across the nuclear envelope and in nuclear movement and positioning. Behaves as a kinesin cargo, providing a functional binding site for kinesin-1 at the nuclear envelope. Hence may contribute to the establishment of secretory epithelial morphology, by promoting kinesin-dependent apical migration of the centrosome and Golgi apparatus and basal localization of the nucleus. The sequence is that of Nesprin-4 (Syne4) from Rattus norvegicus (Rat).